The chain runs to 638 residues: Chaperone protein DnaK 2 (638 aa).

Position 199 is a phosphothreonine; by autocatalysis (Thr-199). The interval 604–626 (AKEQAQSAPEGAQEADAAPADDV) is disordered. Positions 613–624 (EGAQEADAAPAD) are enriched in low complexity.

This sequence belongs to the heat shock protein 70 family.

In terms of biological role, acts as a chaperone. This chain is Chaperone protein DnaK 2, found in Colwellia psychrerythraea (strain 34H / ATCC BAA-681) (Vibrio psychroerythus).